A 375-amino-acid chain; its full sequence is Tyrosine--tRNA ligase (375 aa).

Tyr-37, Tyr-168, Gln-172, Asp-175, and Gln-190 together coordinate L-tyrosine. Residues 251-255 (KMSKS) carry the 'KMSKS' region motif. Lys-254 contacts ATP.

It belongs to the class-I aminoacyl-tRNA synthetase family. TyrS type 4 subfamily. In terms of assembly, homodimer.

The protein localises to the cytoplasm. The catalysed reaction is tRNA(Tyr) + L-tyrosine + ATP = L-tyrosyl-tRNA(Tyr) + AMP + diphosphate + H(+). In terms of biological role, catalyzes the attachment of tyrosine to tRNA(Tyr) in a two-step reaction: tyrosine is first activated by ATP to form Tyr-AMP and then transferred to the acceptor end of tRNA(Tyr). This chain is Tyrosine--tRNA ligase, found in Pyrococcus furiosus (strain ATCC 43587 / DSM 3638 / JCM 8422 / Vc1).